A 180-amino-acid chain; its full sequence is MMKIIRAKLHGIRVTNADLNYHGSITLDPEQCEMAGIYPMEFVDIWNKNSAARISTYVIFGEPGSRCCVLNGAAARTCQKGDELIIAASADISGPEKLYDIKPRILTFLPDNHVDQVLYYDVFQSEKRPYDFRIVDADKHTIESCHTWPNVDITKLRSDLAAKGWSEAEIDSFIASHFSL.

Ser24 functions as the Schiff-base intermediate with substrate; via pyruvic acid in the catalytic mechanism. At Ser24 the chain carries Pyruvic acid (Ser). Residue Thr56 participates in substrate binding. Catalysis depends on Tyr57, which acts as the Proton donor. Residue Gly72–Ala74 participates in substrate binding.

It belongs to the PanD family. As to quaternary structure, heterooctamer of four alpha and four beta subunits. The cofactor is pyruvate. Is synthesized initially as an inactive proenzyme, which is activated by self-cleavage at a specific serine bond to produce a beta-subunit with a hydroxyl group at its C-terminus and an alpha-subunit with a pyruvoyl group at its N-terminus.

Its subcellular location is the cytoplasm. The enzyme catalyses L-aspartate + H(+) = beta-alanine + CO2. Its pathway is cofactor biosynthesis; (R)-pantothenate biosynthesis; beta-alanine from L-aspartate: step 1/1. Catalyzes the pyruvoyl-dependent decarboxylation of aspartate to produce beta-alanine. In Paramagnetospirillum magneticum (strain ATCC 700264 / AMB-1) (Magnetospirillum magneticum), this protein is Aspartate 1-decarboxylase.